Here is a 291-residue protein sequence, read N- to C-terminus: Putative heme-binding peroxidase (291 aa).

His-61 functions as the Proton acceptor in the catalytic mechanism. A heme b-binding site is contributed by His-185. Catalysis depends on Trp-201, which acts as the Tryptophan radical intermediate.

It belongs to the peroxidase family. Cytochrome c peroxidase subfamily. Heme b serves as cofactor.

In terms of biological role, destroys radicals which are normally produced within the cells and which are toxic to biological systems. The chain is Putative heme-binding peroxidase (CCP2) from Candida albicans (strain SC5314 / ATCC MYA-2876) (Yeast).